Here is a 441-residue protein sequence, read N- to C-terminus: MSAITEIYAREVLDSRGNPTVEAEVYTQDGGFGRGIVPSGASTGEHEAVELRDGDKDRYMGKGVTKAVANVNDIIAKEIVGYEVTDQVAIDKAMIALDGTPNKGKLGANAILAVSIAVARAAADELQVPLYNYIGGFNAHVLPTPMMNVINGGAHSDNKVDFQEFMIMPVGAPTVKEAIRMGSETFHHLQKLLAADGKVTSVGDEGGFAPDFANNEEPLEYLIKAIEAAGYKPGKDIAIAVDVASSELWDNDSKKYKLRWSTGEEFTTEEFIKYLEGLVAKYPIISIEDPIDENNWDDWVTITSELGKKVQLVGDDFFVTNTEYLRKGIKMGAANSILIKVNQIGTLTETMEAIEMAKEAGYTAIVSHRSGETEDTTIADLVVATNAGQIKTGSMSRTDRLAKYNQLMRIEDQLTDLVAKYKGINSFYNLSEQARQDIINK.

A (2R)-2-phosphoglycerate-binding site is contributed by Gln-163. The active-site Proton donor is Glu-205. Residues Asp-242, Glu-288, and Asp-315 each coordinate Mg(2+). (2R)-2-phosphoglycerate-binding residues include Lys-340, Arg-369, Ser-370, and Lys-391. Catalysis depends on Lys-340, which acts as the Proton acceptor.

This sequence belongs to the enolase family. Mg(2+) is required as a cofactor.

The protein resides in the cytoplasm. It localises to the secreted. The protein localises to the cell surface. It carries out the reaction (2R)-2-phosphoglycerate = phosphoenolpyruvate + H2O. Its pathway is carbohydrate degradation; glycolysis; pyruvate from D-glyceraldehyde 3-phosphate: step 4/5. In terms of biological role, catalyzes the reversible conversion of 2-phosphoglycerate (2-PG) into phosphoenolpyruvate (PEP). It is essential for the degradation of carbohydrates via glycolysis. In Ligilactobacillus salivarius (strain UCC118) (Lactobacillus salivarius), this protein is Enolase.